Reading from the N-terminus, the 95-residue chain is Signal recognition particle 19 kDa protein (95 aa).

It belongs to the SRP19 family. As to quaternary structure, part of the signal recognition particle protein translocation system, which is composed of SRP and FtsY. Archaeal SRP consists of a 7S RNA molecule of 300 nucleotides and two protein subunits: SRP54 and SRP19.

It localises to the cytoplasm. Functionally, involved in targeting and insertion of nascent membrane proteins into the cytoplasmic membrane. Binds directly to 7S RNA and mediates binding of the 54 kDa subunit of the SRP. The protein is Signal recognition particle 19 kDa protein of Staphylothermus marinus (strain ATCC 43588 / DSM 3639 / JCM 9404 / F1).